The sequence spans 179 residues: MVTNKGCTALTWAVDKGLEKVCEILIPNMSEQAINHVNNNGSTALTLAAWKGLEKICRLLIPKMSPQAINHVTNNGNTALTLAAWKGLEKICELLIPKMSSQAINQVTNNGDTALTLAAWKGLEKICEMLIPKMSEQAINQVTNNGNTALTLAADKSLEKICEMLIPKMSKQAINHMAL.

ANK repeat units lie at residues 5-34, 40-72, 75-104, 110-139, and 145-174; these read KGCT…EQAI, NGST…INHV, NGNT…SQAI, NGDT…EQAI, and NGNT…KQAI.

The chain is Putative ankyrin repeat protein RF_0922 from Rickettsia felis (strain ATCC VR-1525 / URRWXCal2) (Rickettsia azadi).